An 84-amino-acid chain; its full sequence is Replication regulatory protein repA2 (84 aa).

Residues Met1 to Gly13 are compositionally biased toward polar residues. Positions Met1–Arg31 are disordered.

Functionally, this protein is involved in the determination of copy number in gene replication. It binds to the repA promoter thus inhibiting the synthesis of the mRNA for the initiator protein RepA. The protein is Replication regulatory protein repA2 (repA2) of Escherichia coli.